The following is a 172-amino-acid chain: Orotate phosphoribosyltransferase (172 aa).

5-phospho-alpha-D-ribose 1-diphosphate contacts are provided by residues R88, K89, K92, H94, and 113 to 121; that span reads EDVTTSGGS. T117 and R145 together coordinate orotate.

It belongs to the purine/pyrimidine phosphoribosyltransferase family. PyrE subfamily. In terms of assembly, homodimer. It depends on Mg(2+) as a cofactor.

The catalysed reaction is orotidine 5'-phosphate + diphosphate = orotate + 5-phospho-alpha-D-ribose 1-diphosphate. It participates in pyrimidine metabolism; UMP biosynthesis via de novo pathway; UMP from orotate: step 1/2. Its function is as follows. Catalyzes the transfer of a ribosyl phosphate group from 5-phosphoribose 1-diphosphate to orotate, leading to the formation of orotidine monophosphate (OMP). This is Orotate phosphoribosyltransferase from Methanospirillum hungatei JF-1 (strain ATCC 27890 / DSM 864 / NBRC 100397 / JF-1).